A 215-amino-acid polypeptide reads, in one-letter code: Adenylate kinase (215 aa).

10–15 contacts ATP; the sequence is GAGKGT. The NMP stretch occupies residues 30–60; sequence STGDMLRAAIIKAGTEMGKQAKSVIDAGQLV. AMP is bound by residues Thr31, Arg36, 58–60, 86–89, and Gln93; these read QLV and GFPR. The LID stretch occupies residues 123 to 160; that stretch reads GRRAHLPSGRTYHVTFNPSKVEGQDDVTGEPLVIREDD. Residues Arg124 and 133 to 134 contribute to the ATP site; that span reads TY. Arg157 and Arg168 together coordinate AMP. Position 201 (Lys201) interacts with ATP.

This sequence belongs to the adenylate kinase family. Monomer.

Its subcellular location is the cytoplasm. The enzyme catalyses AMP + ATP = 2 ADP. Its pathway is purine metabolism; AMP biosynthesis via salvage pathway; AMP from ADP: step 1/1. Catalyzes the reversible transfer of the terminal phosphate group between ATP and AMP. Plays an important role in cellular energy homeostasis and in adenine nucleotide metabolism. This is Adenylate kinase from Aliivibrio salmonicida (strain LFI1238) (Vibrio salmonicida (strain LFI1238)).